The sequence spans 375 residues: Aminomethyltransferase (375 aa).

The protein belongs to the GcvT family. The glycine cleavage system is composed of four proteins: P, T, L and H.

It carries out the reaction N(6)-[(R)-S(8)-aminomethyldihydrolipoyl]-L-lysyl-[protein] + (6S)-5,6,7,8-tetrahydrofolate = N(6)-[(R)-dihydrolipoyl]-L-lysyl-[protein] + (6R)-5,10-methylene-5,6,7,8-tetrahydrofolate + NH4(+). Its function is as follows. The glycine cleavage system catalyzes the degradation of glycine. The sequence is that of Aminomethyltransferase from Cupriavidus pinatubonensis (strain JMP 134 / LMG 1197) (Cupriavidus necator (strain JMP 134)).